Here is a 406-residue protein sequence, read N- to C-terminus: Phosphatidylserine decarboxylase proenzyme, mitochondrial (406 aa).

A mitochondrion-targeting transit peptide spans 1 to 49 (MAVAGGRGCVRSLREGVLWRSSPCHCDYTATRHFLGALQKLPLQAWVRK). Topologically, residues 50–60 (VHTAPLRTLFL) are mitochondrial matrix. A helical membrane pass occupies residues 61-79 (LRPVPILLAAGGGYAGYRQ). The Mitochondrial intermembrane portion of the chain corresponds to 80–406 (YEKYRERQLE…ILFGEALGSL (327 aa)). Active-site charge relay system; for autoendoproteolytic cleavage activity residues include Asp188, His264, and Ser375. Ser375 serves as the catalytic Schiff-base intermediate with substrate; via pyruvic acid; for decarboxylase activity. Pyruvic acid (Ser); by autocatalysis is present on Ser375.

The protein belongs to the phosphatidylserine decarboxylase family. PSD-B subfamily. Eukaryotic type I sub-subfamily. As to quaternary structure, heterodimer of a large membrane-associated beta subunit and a small pyruvoyl-containing alpha subunit. Requires pyruvate as cofactor. Is synthesized initially as an inactive proenzyme. Formation of the active enzyme involves a self-maturation process in which the active site pyruvoyl group is generated from an internal serine residue via an autocatalytic post-translational modification. Two non-identical subunits are generated from the proenzyme in this reaction, and the pyruvate is formed at the N-terminus of the alpha chain, which is derived from the carboxyl end of the proenzyme. The autoendoproteolytic cleavage occurs by a canonical serine protease mechanism, in which the side chain hydroxyl group of the serine supplies its oxygen atom to form the C-terminus of the beta chain, while the remainder of the serine residue undergoes an oxidative deamination to produce ammonia and the pyruvoyl prosthetic group on the alpha chain. During this reaction, the Ser that is part of the protease active site of the proenzyme becomes the pyruvoyl prosthetic group, which constitutes an essential element of the active site of the mature decarboxylase.

Its subcellular location is the mitochondrion inner membrane. The protein localises to the cytoplasm. It is found in the lipid droplet. It carries out the reaction a 1,2-diacyl-sn-glycero-3-phospho-L-serine + H(+) = a 1,2-diacyl-sn-glycero-3-phosphoethanolamine + CO2. Its pathway is phospholipid metabolism; phosphatidylethanolamine biosynthesis. Its activity is regulated as follows. Inhibited by hydroxylamine. Catalyzes the formation of phosphatidylethanolamine (PtdEtn) from phosphatidylserine (PtdSer). Plays a central role in phospholipid metabolism and in the interorganelle trafficking of phosphatidylserine. May be involved in lipid droplet biogenesis at the endoplasmic reticulum membrane. The sequence is that of Phosphatidylserine decarboxylase proenzyme, mitochondrial from Rattus norvegicus (Rat).